The chain runs to 971 residues: Xylanolytic transcriptional activator xlnR (971 aa).

Disordered regions lie at residues 1–25 (MSTT…PVGM) and 55–123 (GASA…PVRR). A compositionally biased stretch (low complexity) spans 9–18 (FTSSFSPFSS). Residues 67–96 (LRSSISKPQGQQLYSDESSAQHTQNATTGF) show a composition bias toward polar residues. Positions 129-155 (CDQCNQLRTKCDGQNPCAHCIEFGLTC) form a DNA-binding region, zn(2)-C6 fungal-type. 3 stretches are compositionally biased toward polar residues: residues 182 to 199 (NGTA…SVSS), 227 to 241 (NLAT…QHSD), and 249 to 260 (QGSQQTPHSQPS). Disordered stretches follow at residues 182–263 (NGTA…SLGG), 295–316 (LHPS…GMNS), and 580–610 (RELP…NLPP).

This sequence belongs to the xlnR/xlr1 family.

The protein resides in the nucleus. Functionally, transcriptional activator of the xylanolytic system. Involved in the regulation of extracellular cellulolytic and xylanolytic genes and in the regulation of the intracellular activities of D-xylose catabolic genes in the pentose catabolic pathway (PCP) in response to the presence of D-xylose. The chain is Xylanolytic transcriptional activator xlnR (xlnR) from Aspergillus flavus (strain ATCC 200026 / FGSC A1120 / IAM 13836 / NRRL 3357 / JCM 12722 / SRRC 167).